Here is a 212-residue protein sequence, read N- to C-terminus: Deoxyribose-phosphate aldolase (212 aa).

Catalysis depends on Asp90, which acts as the Proton donor/acceptor. Lys151 serves as the catalytic Schiff-base intermediate with acetaldehyde. The active-site Proton donor/acceptor is Lys176.

The protein belongs to the DeoC/FbaB aldolase family. DeoC type 1 subfamily.

It is found in the cytoplasm. It catalyses the reaction 2-deoxy-D-ribose 5-phosphate = D-glyceraldehyde 3-phosphate + acetaldehyde. It participates in carbohydrate degradation; 2-deoxy-D-ribose 1-phosphate degradation; D-glyceraldehyde 3-phosphate and acetaldehyde from 2-deoxy-alpha-D-ribose 1-phosphate: step 2/2. Functionally, catalyzes a reversible aldol reaction between acetaldehyde and D-glyceraldehyde 3-phosphate to generate 2-deoxy-D-ribose 5-phosphate. The chain is Deoxyribose-phosphate aldolase from Halobacterium salinarum (strain ATCC 29341 / DSM 671 / R1).